Reading from the N-terminus, the 459-residue chain is tRNA modification GTPase MnmE (459 aa).

Residues R21, E84, and K123 each coordinate (6S)-5-formyl-5,6,7,8-tetrahydrofolate. A TrmE-type G domain is found at 219–380 (GMLTVIVGQP…LEKEIKQRVY (162 aa)). N229 contacts K(+). GTP is bound by residues 229-234 (NVGKSS), 248-254 (TDIPGTT), and 273-276 (DTAG). S233 lines the Mg(2+) pocket. K(+) is bound by residues T248, I250, and T253. Residue T254 participates in Mg(2+) binding. K459 serves as a coordination point for (6S)-5-formyl-5,6,7,8-tetrahydrofolate.

The protein belongs to the TRAFAC class TrmE-Era-EngA-EngB-Septin-like GTPase superfamily. TrmE GTPase family. As to quaternary structure, homodimer. Heterotetramer of two MnmE and two MnmG subunits. It depends on K(+) as a cofactor.

It is found in the cytoplasm. In terms of biological role, exhibits a very high intrinsic GTPase hydrolysis rate. Involved in the addition of a carboxymethylaminomethyl (cmnm) group at the wobble position (U34) of certain tRNAs, forming tRNA-cmnm(5)s(2)U34. The sequence is that of tRNA modification GTPase MnmE from Desulfitobacterium hafniense (strain Y51).